The primary structure comprises 188 residues: Adenine phosphoribosyltransferase (188 aa).

This sequence belongs to the purine/pyrimidine phosphoribosyltransferase family. In terms of assembly, homodimer.

The protein localises to the cytoplasm. It catalyses the reaction AMP + diphosphate = 5-phospho-alpha-D-ribose 1-diphosphate + adenine. It functions in the pathway purine metabolism; AMP biosynthesis via salvage pathway; AMP from adenine: step 1/1. Functionally, catalyzes a salvage reaction resulting in the formation of AMP, that is energically less costly than de novo synthesis. In Neisseria meningitidis serogroup C (strain 053442), this protein is Adenine phosphoribosyltransferase.